Reading from the N-terminus, the 652-residue chain is Interferon-induced GTP-binding protein Mx1 (652 aa).

The interval 1 to 27 (MKERTSACRHGTPQKHPDTSEESQAME) is disordered. The 274-residue stretch at 58-331 (DLALPAIAVI…LTSHICKSLP (274 aa)) folds into the Dynamin-type G domain. The interval 68–75 (GDQSSGKS) is G1 motif. Residue 68 to 75 (GDQSSGKS) participates in GTP binding. The interval 93 to 95 (VTR) is G2 motif. The tract at residues 169–172 (DLPG) is G3 motif. Residues 169 to 173 (DLPGI) and 238 to 241 (TKPD) contribute to the GTP site. The tract at residues 238–241 (TKPD) is G4 motif. The segment at 270–273 (KCRG) is G5 motif. The bundle signaling element (BSE) stretch occupies residues 332–357 (ILENQINVNHQIASEELQKYGADIPE). The segment at 357 to 526 (EDDSKRLSFL…HFQMEHIVYC (170 aa)) is middle domain. The interval 358 to 622 (DDSKRLSFLM…TSKCNWFLTE (265 aa)) is stalk. The GED domain occupies 564-652 (TTEMTQHLNA…AQRKLAKFSN (89 aa)).

The protein belongs to the TRAFAC class dynamin-like GTPase superfamily. Dynamin/Fzo/YdjA family. As to quaternary structure, homooligomer. Oligomerizes into multimeric filamentous or ring-like structures by virtue of its stalk domain. Oligomerization is critical for GTPase activity, protein stability, and recognition of viral target structures. Interacts with TRPC1, TRPC3, TRPC4, TRPC5, TRPC6 and TRPC7. Interacts with HSPA5. Interacts with TUBB/TUBB5. Interacts with DDX39A and DDX39B. Post-translationally, ISGylated.

It localises to the nucleus. Its subcellular location is the cytoplasm. The protein localises to the endoplasmic reticulum membrane. It is found in the perinuclear region. Interferon-induced dynamin-like GTPase which has antiviral activity against influenza A virus, (IAV) and Thogoto virus (THOV). Inhibits IAV by interfering with the process of primary transcription, probably by affecting the viral polymerase function. This chain is Interferon-induced GTP-binding protein Mx1 (Mx1), found in Rattus norvegicus (Rat).